The chain runs to 371 residues: MADSQRRPRVFFDIQIGNEKTGRIALELVLVPKTAENFRALCTGEKGMGKQGKPLHFKGSIFHRVIKQFMIQGGDFTAFNGTGGESIYGEKFPDENFELKHDKPFLLSMANSGPGTNGSQFFITTVPTPHLDGKHVVFGEVINGKSVVRKVENMNTQADKPVKDVTIVECGELTGQDYDDADKQTPDATGDPYEDFPDDHQGEELNAQVCFKIASELKNFGNAAFKSGNLALGLEKYQKGLRYLHEFPEPDENDPKELDGQIKALRFALHSNSSLLANKLAQYGNGRSWATYALDTANAANAKDADKAKAYYRRAVASSGLKEEDEALKDLQEAEKLAPGDAGITNEIAKVKKAIKDRQAKERATAQKFFS.

In terms of domain architecture, PPIase cyclophilin-type spans 11–172 (FFDIQIGNEK…KDVTIVECGE (162 aa)). A disordered region spans residues 175 to 195 (GQDYDDADKQTPDATGDPYED). 3 TPR repeats span residues 214 to 247 (ASEL…LHEF), 267 to 300 (FALH…ANAA), and 308 to 341 (AKAY…APGD).

It belongs to the cyclophilin-type PPIase family. PPIase D subfamily.

The protein localises to the cytoplasm. The enzyme catalyses [protein]-peptidylproline (omega=180) = [protein]-peptidylproline (omega=0). Its function is as follows. PPIases accelerate the folding of proteins. It catalyzes the cis-trans isomerization of proline imidic peptide bonds in oligopeptides. The sequence is that of Peptidyl-prolyl cis-trans isomerase D (cpr6) from Aspergillus oryzae (strain ATCC 42149 / RIB 40) (Yellow koji mold).